Consider the following 236-residue polypeptide: MFDSLVDFLKTNIDQLNGHEVQISSEFKEHHNEDSKYIIKNWLFSSPEYRKWRITRLDGGKKLQVFNTVAYPNFESELPILGADILWFGTSQKLLAILDYQPLIQESKYLEKYCSSLGIIKEEYSAFDNNKMKNIYDSKKYFSPWVIICRGNKLNLDRDLNDIFHSFVNNYLNIYKSNPVNQFLNSEEIKINQIKYDKYSFEKDPADKLFKSFFGEKWTKKFINKFLFTLNNEIIH.

It belongs to the HY2 family.

It catalyses the reaction 15,16-dihydrobiliverdin + oxidized 2[4Fe-4S]-[ferredoxin] = biliverdin IXalpha + reduced 2[4Fe-4S]-[ferredoxin] + 2 H(+). Its function is as follows. Catalyzes the two-electron reduction of biliverdin IX-alpha at the C15 methine bridge. This Prochlorococcus marinus (strain AS9601) protein is 15,16-dihydrobiliverdin:ferredoxin oxidoreductase.